The primary structure comprises 465 residues: ATP synthase subunit beta (465 aa).

ATP is bound at residue 149-156 (GGAGVGKT).

The protein belongs to the ATPase alpha/beta chains family. F-type ATPases have 2 components, CF(1) - the catalytic core - and CF(0) - the membrane proton channel. CF(1) has five subunits: alpha(3), beta(3), gamma(1), delta(1), epsilon(1). CF(0) has three main subunits: a(1), b(2) and c(9-12). The alpha and beta chains form an alternating ring which encloses part of the gamma chain. CF(1) is attached to CF(0) by a central stalk formed by the gamma and epsilon chains, while a peripheral stalk is formed by the delta and b chains.

The protein localises to the cell inner membrane. The enzyme catalyses ATP + H2O + 4 H(+)(in) = ADP + phosphate + 5 H(+)(out). Functionally, produces ATP from ADP in the presence of a proton gradient across the membrane. The catalytic sites are hosted primarily by the beta subunits. This chain is ATP synthase subunit beta, found in Dictyoglomus thermophilum (strain ATCC 35947 / DSM 3960 / H-6-12).